Consider the following 182-residue polypeptide: Core-binding factor subunit beta (182 aa).

A173 is subject to Phosphoserine.

It belongs to the CBF-beta family. Heterodimer with RUNX1, RUNX2 and RUNX3. Interacts with COPRS. Found in a complex with PRMT5 and RUNX1. In terms of assembly, (Microbial infection) Interacts with HIV-1 Vif; forming an active cullin-5-RING E3 ubiquitin-protein ligase complex (ECS complex).

It is found in the nucleus. Functionally, forms the heterodimeric complex core-binding factor (CBF) with RUNX family proteins (RUNX1, RUNX2, and RUNX3). RUNX members modulate the transcription of their target genes through recognizing the core consensus binding sequence 5'-TGTGGT-3', or very rarely, 5'-TGCGGT-3', within their regulatory regions via their runt domain, while CBFB is a non-DNA-binding regulatory subunit that allosterically enhances the sequence-specific DNA-binding capacity of RUNX. The heterodimers bind to the core site of a number of enhancers and promoters, including murine leukemia virus, polyomavirus enhancer, T-cell receptor enhancers, LCK, IL3 and GM-CSF promoters. CBF complexes repress ZBTB7B transcription factor during cytotoxic (CD8+) T cell development. They bind to RUNX-binding sequence within the ZBTB7B locus acting as transcriptional silencer and allowing for cytotoxic T cell differentiation. In terms of biological role, (Microbial infection) Following infection, hijacked by the HIV-1 Vif protein, leading to the formation a cullin-5-RING E3 ubiquitin-protein ligase complex (ECS complex) that catalyzes ubiquitination and degradation of APOBEC3F and APOBEC3G. The complex can also ubiquitinate APOBEC3H to some extent. Association with HIV-1 Vif protein also inhibits the transcription coactivator activity of CBFB/CBF-beta. The polypeptide is Core-binding factor subunit beta (CBFB) (Homo sapiens (Human)).